The chain runs to 23 residues: NADP-dependent malic enzyme (23 aa).

The protein belongs to the malic enzymes family. In terms of assembly, homotetramer.

It carries out the reaction (S)-malate + NADP(+) = pyruvate + CO2 + NADPH. The enzyme catalyses oxaloacetate + H(+) = pyruvate + CO2. The chain is NADP-dependent malic enzyme from Populus euphratica (Euphrates poplar).